A 164-amino-acid chain; its full sequence is Ribonuclease P protein component 2 (164 aa).

It belongs to the eukaryotic/archaeal RNase P protein component 2 family. In terms of assembly, consists of a catalytic RNA component and at least 4-5 protein subunits.

Its subcellular location is the cytoplasm. It catalyses the reaction Endonucleolytic cleavage of RNA, removing 5'-extranucleotides from tRNA precursor.. Functionally, part of ribonuclease P, a protein complex that generates mature tRNA molecules by cleaving their 5'-ends. This Halobacterium salinarum (strain ATCC 29341 / DSM 671 / R1) protein is Ribonuclease P protein component 2.